The chain runs to 472 residues: UDP-N-acetylmuramate--L-alanine ligase (472 aa).

122–128 (GTHGKTT) is an ATP binding site.

This sequence belongs to the MurCDEF family.

The protein resides in the cytoplasm. It carries out the reaction UDP-N-acetyl-alpha-D-muramate + L-alanine + ATP = UDP-N-acetyl-alpha-D-muramoyl-L-alanine + ADP + phosphate + H(+). Its pathway is cell wall biogenesis; peptidoglycan biosynthesis. Functionally, cell wall formation. In Thermobifida fusca (strain YX), this protein is UDP-N-acetylmuramate--L-alanine ligase.